A 465-amino-acid polypeptide reads, in one-letter code: Cysteine--tRNA ligase (465 aa).

C29 is a binding site for Zn(2+). The 'HIGH' region signature appears at 31 to 41 (PTVYNYIHIGN). Residues C209, H234, and E238 each contribute to the Zn(2+) site. The short motif at 266–270 (KMSKS) is the 'KMSKS' region element. K269 is an ATP binding site. Position 270 is a phosphoserine (S270).

This sequence belongs to the class-I aminoacyl-tRNA synthetase family. Monomer. Requires Zn(2+) as cofactor.

The protein resides in the cytoplasm. It catalyses the reaction tRNA(Cys) + L-cysteine + ATP = L-cysteinyl-tRNA(Cys) + AMP + diphosphate. This Bacillus cereus (strain ATCC 10987 / NRS 248) protein is Cysteine--tRNA ligase.